A 412-amino-acid polypeptide reads, in one-letter code: Alanyl-tRNA editing protein Aarsd1 (412 aa).

Zn(2+)-binding residues include H109 and H113. S174 carries the post-translational modification Phosphoserine. Zn(2+) is bound by residues C209 and H213.

Belongs to the class-II aminoacyl-tRNA synthetase family. Alax-L subfamily. Requires Zn(2+) as cofactor.

Its subcellular location is the cytoplasm. In terms of biological role, functions in trans to edit the amino acid moiety from incorrectly charged Ser-tRNA(Ala). This is Alanyl-tRNA editing protein Aarsd1 (Aarsd1) from Mus musculus (Mouse).